A 247-amino-acid chain; its full sequence is LHFPL tetraspan subfamily member 4 protein (247 aa).

A run of 4 helical transmembrane segments spans residues Ile22–Ile42, Phe97–Phe117, Ile127–Pro147, and Ile178–Gly198.

Belongs to the LHFP family. As to quaternary structure, interacts with GABA(A) receptor subunits. Interacts with GABRB3. Interacts with GABRA2. Interacts with GABRG2. Interacts with GABRA1. Identified in a complex of 720 kDa composed of LHFPL4, NLGN2, GABRA1, GABRB2, GABRG2 and GABRB3. Interacts with NLGN2; leading to mutual regulation of protein level and synaptic clustering. Highly expressed in the brain, including the cortex, hippocampus, midbrain, olfactory bulb pona plus medulla (at protein level). Expressed in the in the cerebellar granular layer and in granular layer. Colocalized with GPHN at inhibitory synapses. Weakly expressed in heart, testis, lung, intestine, vagina, ovary and uterus.

It localises to the cell projection. The protein localises to the dendrite. The protein resides in the postsynaptic cell membrane. Functionally, plays a role in the regulation of inhibitory synapse formation and function by being involved in maintening gamma-aminobutyric acid receptors (GABAARs) clustering and their associated scaffold proteins at inhibitory synaptic sites. Acts in concert with NLGN2 to recruit or stabilize GABAARs. The sequence is that of LHFPL tetraspan subfamily member 4 protein from Mus musculus (Mouse).